A 55-amino-acid chain; its full sequence is Small ribosomal subunit protein eS31 (55 aa).

Positions 27, 30, 45, and 48 each coordinate Zn(2+). The C4-type zinc-finger motif lies at 27–48; sequence CSRCGKGFFMAQHKDRRSCGKC.

The protein belongs to the eukaryotic ribosomal protein eS31 family. In terms of assembly, part of the 30S ribosomal subunit. Requires Zn(2+) as cofactor.

In Cenarchaeum symbiosum (strain A), this protein is Small ribosomal subunit protein eS31.